Here is a 267-residue protein sequence, read N- to C-terminus: MSLEVRGIEVWRGRGRTLGPMDLTLEPGEVLAVVGPNGAGKSTLLSAMSGELRCSTGEVLLDGTPLLQWKPRERAMRLGVLPQESSLGFGFTALEVALLGRSPHSSRAEGSADLAAAVAALDATDTRHLASRSYLTLSGGERQRVQLSRVLAQLSEPLASGHRYLLLDEPTASLDLAHQHLVLEAAARFAQAGGAVLAVLHDLNLAARYAHRMAVLAEGRVVELGAPAQVLSQELVARVFGLRVQVVEWPGSPGPLVIPEGRAPLTP.

One can recognise an ABC transporter domain in the interval 3-243; the sequence is LEVRGIEVWR…ELVARVFGLR (241 aa). 35–42 serves as a coordination point for ATP; it reads GPNGAGKS.

It belongs to the ABC transporter superfamily. Heme (hemin) importer (TC 3.A.1.14.5) family. In terms of assembly, the complex is composed of two ATP-binding proteins (HmuV), two transmembrane proteins (HmuU) and a solute-binding protein (HmuT).

It is found in the cell inner membrane. Functionally, part of the ABC transporter complex HmuTUV involved in hemin import. Responsible for energy coupling to the transport system. This is Hemin import ATP-binding protein HmuV from Myxococcus xanthus (strain DK1622).